Reading from the N-terminus, the 432-residue chain is Glutamyl-tRNA reductase (432 aa).

Residues 50 to 53, Ser110, 115 to 117, and Gln121 contribute to the substrate site; these read TCNR and ETQ. Residue Cys51 is the Nucleophile of the active site. Residue 190-195 coordinates NADP(+); the sequence is GAGEMS.

Belongs to the glutamyl-tRNA reductase family. Homodimer.

It carries out the reaction (S)-4-amino-5-oxopentanoate + tRNA(Glu) + NADP(+) = L-glutamyl-tRNA(Glu) + NADPH + H(+). It participates in porphyrin-containing compound metabolism; protoporphyrin-IX biosynthesis; 5-aminolevulinate from L-glutamyl-tRNA(Glu): step 1/2. Functionally, catalyzes the NADPH-dependent reduction of glutamyl-tRNA(Glu) to glutamate 1-semialdehyde (GSA). The polypeptide is Glutamyl-tRNA reductase (Aliarcobacter butzleri (strain RM4018) (Arcobacter butzleri)).